A 276-amino-acid polypeptide reads, in one-letter code: Energy-coupling factor transporter ATP-binding protein EcfA2 (276 aa).

Residues 1–233 (MKTPFERLAL…GEEMAGWGLD (233 aa)) form the ABC transporter domain. 27–34 (GHTGSGKS) provides a ligand contact to ATP. Glutamate 158 (proton acceptor) is an active-site residue.

Belongs to the ABC transporter superfamily. Energy-coupling factor EcfA family. As to quaternary structure, forms a stable energy-coupling factor (ECF) transporter complex composed of 2 membrane-embedded substrate-binding proteins (S component), 2 ATP-binding proteins (A component) and 2 transmembrane proteins (T component).

The protein localises to the cell membrane. Functionally, ATP-binding (A) component of a common energy-coupling factor (ECF) ABC-transporter complex. Unlike classic ABC transporters this ECF transporter provides the energy necessary to transport a number of different substrates. The protein is Energy-coupling factor transporter ATP-binding protein EcfA2 of Bacillus subtilis (strain 168).